A 95-amino-acid polypeptide reads, in one-letter code: Co-chaperonin GroES (95 aa).

The segment covering 12–22 (VKPSPAEEKTK) has biased composition (basic and acidic residues). The tract at residues 12–38 (VKPSPAEEKTKGGLYIPDSGKEKPQHG) is disordered.

It belongs to the GroES chaperonin family. As to quaternary structure, heptamer of 7 subunits arranged in a ring. Interacts with the chaperonin GroEL.

It localises to the cytoplasm. Together with the chaperonin GroEL, plays an essential role in assisting protein folding. The GroEL-GroES system forms a nano-cage that allows encapsulation of the non-native substrate proteins and provides a physical environment optimized to promote and accelerate protein folding. GroES binds to the apical surface of the GroEL ring, thereby capping the opening of the GroEL channel. This Chloroherpeton thalassium (strain ATCC 35110 / GB-78) protein is Co-chaperonin GroES.